Here is a 451-residue protein sequence, read N- to C-terminus: Putative gluconeogenesis factor (451 aa).

It belongs to the gluconeogenesis factor family.

The protein localises to the cytoplasm. Required for morphogenesis under gluconeogenic growth conditions. The polypeptide is Putative gluconeogenesis factor (Clostridium acetobutylicum (strain ATCC 824 / DSM 792 / JCM 1419 / IAM 19013 / LMG 5710 / NBRC 13948 / NRRL B-527 / VKM B-1787 / 2291 / W)).